The sequence spans 242 residues: Probable septum site-determining protein MinC (242 aa).

Belongs to the MinC family. In terms of assembly, interacts with MinD and FtsZ.

In terms of biological role, cell division inhibitor that blocks the formation of polar Z ring septums. Rapidly oscillates between the poles of the cell to destabilize FtsZ filaments that have formed before they mature into polar Z rings. Prevents FtsZ polymerization. This Thioalkalivibrio sulfidiphilus (strain HL-EbGR7) protein is Probable septum site-determining protein MinC.